A 237-amino-acid chain; its full sequence is Aliphatic sulfonates import ATP-binding protein SsuB 1 (237 aa).

The ABC transporter domain maps to 5 to 221 (LMNIRVDRKA…PRDRRDPLLA (217 aa)). Residue 38 to 45 (GPSGCGKS) coordinates ATP.

This sequence belongs to the ABC transporter superfamily. Aliphatic sulfonates importer (TC 3.A.1.17.2) family. In terms of assembly, the complex is composed of two ATP-binding proteins (SsuB), two transmembrane proteins (SsuC) and a solute-binding protein (SsuA).

Its subcellular location is the cell inner membrane. The catalysed reaction is ATP + H2O + aliphatic sulfonate-[sulfonate-binding protein]Side 1 = ADP + phosphate + aliphatic sulfonateSide 2 + [sulfonate-binding protein]Side 1.. Its function is as follows. Part of the ABC transporter complex SsuABC involved in aliphatic sulfonates import. Responsible for energy coupling to the transport system. The chain is Aliphatic sulfonates import ATP-binding protein SsuB 1 from Pseudomonas savastanoi pv. phaseolicola (strain 1448A / Race 6) (Pseudomonas syringae pv. phaseolicola (strain 1448A / Race 6)).